The following is a 173-amino-acid chain: Regulatory protein RecX (173 aa).

Belongs to the RecX family.

The protein localises to the cytoplasm. In terms of biological role, modulates RecA activity. The protein is Regulatory protein RecX of Mycobacterium avium (strain 104).